Here is a 456-residue protein sequence, read N- to C-terminus: ATP synthase subunit beta 1 (456 aa).

152 to 159 (GGAGVGKS) provides a ligand contact to ATP.

This sequence belongs to the ATPase alpha/beta chains family. F-type ATPases have 2 components, CF(1) - the catalytic core - and CF(0) - the membrane proton channel. CF(1) has five subunits: alpha(3), beta(3), gamma(1), delta(1), epsilon(1). CF(0) has three main subunits: a(1), b(2) and c(9-12). The alpha and beta chains form an alternating ring which encloses part of the gamma chain. CF(1) is attached to CF(0) by a central stalk formed by the gamma and epsilon chains, while a peripheral stalk is formed by the delta and b chains.

It localises to the cell membrane. The enzyme catalyses ATP + H2O + 4 H(+)(in) = ADP + phosphate + 5 H(+)(out). Its function is as follows. Produces ATP from ADP in the presence of a proton gradient across the membrane. The catalytic sites are hosted primarily by the beta subunits. This is ATP synthase subunit beta 1 from Listeria monocytogenes serotype 4b (strain F2365).